We begin with the raw amino-acid sequence, 102 residues long: Large ribosomal subunit protein bL21 (102 aa).

This sequence belongs to the bacterial ribosomal protein bL21 family. In terms of assembly, part of the 50S ribosomal subunit. Contacts protein L20.

Its function is as follows. This protein binds to 23S rRNA in the presence of protein L20. The polypeptide is Large ribosomal subunit protein bL21 (Oceanobacillus iheyensis (strain DSM 14371 / CIP 107618 / JCM 11309 / KCTC 3954 / HTE831)).